Consider the following 206-residue polypeptide: Thymidylate kinase (206 aa).

11-18 is a binding site for ATP; it reads GIDGAGKT.

This sequence belongs to the thymidylate kinase family.

The catalysed reaction is dTMP + ATP = dTDP + ADP. Phosphorylation of dTMP to form dTDP in both de novo and salvage pathways of dTTP synthesis. This Burkholderia ambifaria (strain MC40-6) protein is Thymidylate kinase.